The sequence spans 294 residues: 4-hydroxy-tetrahydrodipicolinate synthase (294 aa).

Thr45 provides a ligand contact to pyruvate. The Proton donor/acceptor role is filled by Tyr133. Lys161 acts as the Schiff-base intermediate with substrate in catalysis. Ile203 provides a ligand contact to pyruvate.

Belongs to the DapA family. In terms of assembly, homotetramer; dimer of dimers.

It localises to the cytoplasm. The enzyme catalyses L-aspartate 4-semialdehyde + pyruvate = (2S,4S)-4-hydroxy-2,3,4,5-tetrahydrodipicolinate + H2O + H(+). It participates in amino-acid biosynthesis; L-lysine biosynthesis via DAP pathway; (S)-tetrahydrodipicolinate from L-aspartate: step 3/4. Catalyzes the condensation of (S)-aspartate-beta-semialdehyde [(S)-ASA] and pyruvate to 4-hydroxy-tetrahydrodipicolinate (HTPA). This is 4-hydroxy-tetrahydrodipicolinate synthase from Buchnera aphidicola subsp. Schizaphis graminum (strain Sg).